The sequence spans 629 residues: Leucine-rich repeat protein soc-2 homolog (629 aa).

The span at 1-19 (MNLCSSGATASTTSLSSTG) shows a compositional bias: low complexity. Residues 1 to 133 (MNLCSSGATA…PTTKKSKPIQ (133 aa)) form a disordered region. Residues 21 to 45 (RNGGTSEGGGEGAGGGGGSGGGGGN) are compositionally biased toward gly residues. 20 LRR repeats span residues 149–170 (GIKR…VKEC), 172–193 (HLTE…IGCL), 195–217 (NLRN…QNCK), 218–239 (QLKV…IYRL), 241–262 (TLTT…LRQL), 264–285 (NLTM…IGAL), 287–308 (NLTT…IGNC), 310–331 (NLSA…IGNL), 333–355 (SLVR…KNCK), 356–377 (SMDE…MLAS), 380–401 (GLTT…GPAQ), 404–425 (NVYS…IFSR), 428–449 (GLTK…IGTW), 451–472 (NMVE…IMNL), 474–495 (NLEI…IGNM), 497–518 (KLRI…IGLL), 520–541 (ELQR…IGHL), 543–564 (NLTH…IGSL), 566–588 (GLEN…LALC), and 590–611 (NLKY…IQAG).

The protein belongs to the SHOC2 family.

In terms of biological role, acts as a Ras effector and participates in MAPK pathway activation. Probably acts as a regulatory subunit of protein phosphatase that specifically dephosphorylates Raf kinase and stimulate Raf activity at specialized signaling complexes upon Ras activation. This chain is Leucine-rich repeat protein soc-2 homolog (Sur-8), found in Drosophila pseudoobscura pseudoobscura (Fruit fly).